Consider the following 421-residue polypeptide: Testin (421 aa).

The 108-residue stretch at 92–199 (MILTNPVAAK…GDVKLPREMN (108 aa)) folds into the PET domain. Residues 133–164 (EKQPVAGSEGAQYRKKQLAKQLPAHDQDPSKC) are disordered. Positions 155–164 (PAHDQDPSKC) are enriched in basic and acidic residues. LIM zinc-binding domains follow at residues 234 to 297 (YSCY…CDSE), 299 to 359 (PRCA…NHAV), and 362 to 421 (QGCH…KMMS).

The protein belongs to the prickle / espinas / testin family. As to quaternary structure, interacts via LIM domain 1 with ZYX. Interacts (via LIM domain 3) with ENAH and VASP. Interacts with ALKBH4, talin, actin, alpha-actinin, GRIP1 and PXN. Interacts (via LIM domain 2) with ACTL7A (via N-terminus). Heterodimer with ACTL7A; the heterodimer interacts with ENAH to form a heterotrimer.

The protein resides in the cytoplasm. The protein localises to the cell junction. It localises to the focal adhesion. Scaffold protein that may play a role in cell adhesion, cell spreading and in the reorganization of the actin cytoskeleton. Plays a role in the regulation of cell proliferation. May act as a tumor suppressor. The polypeptide is Testin (TES) (Sus scrofa (Pig)).